The sequence spans 1363 residues: Vascular endothelial growth factor receptor 3 (1363 aa).

A signal peptide spans 1 to 24; sequence MQPGAALNLRLWLCLGLLQGLANG. Residues 25 to 775 lie on the Extracellular side of the membrane; the sequence is YSMTPPTLNI…EGSEDKGSME (751 aa). Residues N33, N104, N166, N251, N299, and N411 are each glycosylated (N-linked (GlcNAc...) asparagine). 7 Ig-like C2-type domains span residues 44-118, 151-213, 230-326, 331-415, 422-552, 555-671, and 678-764; these read GDSL…YIKA, KDSM…WGDQ, YDIQ…TEVI, PFIS…ISLE, PHIH…FYVT, PDGF…KYLS, and PRLT…ASVA. Cystine bridges form between C51-C111 and C158-C206. Residues C252 and C310 are joined by a disulfide bond. Cystine bridges form between C445–C534, C466–C486, and C578–C653. N-linked (GlcNAc...) asparagine glycans are attached at residues N515, N527, N582, N594, N683, and N690. A disulfide bridge connects residues C699 and C751. Residue N758 is glycosylated (N-linked (GlcNAc...) asparagine). Residues 776–796 traverse the membrane as a helical segment; it reads IVILIGTGVIAVFFWVLLLLI. Topologically, residues 797 to 1363 are cytoplasmic; sequence FCNMKRPAHA…GSTFFADSSY (567 aa). Y830 and Y833 each carry phosphotyrosine; by SRC. In terms of domain architecture, Protein kinase spans 845 to 1173; that stretch reads LHLGRVLGHG…DLVEILGDLL (329 aa). Residues 851–859 and K879 contribute to the ATP site; that span reads LGHGAFGKV. Catalysis depends on D1037, which acts as the Proton acceptor. Y1063 carries the post-translational modification Phosphotyrosine; by autocatalysis and SRC. Phosphotyrosine; by autocatalysis is present on residues Y1068, Y1230, Y1231, and Y1265. Positions 1288 to 1330 are disordered; the sequence is ESRHRPEGSFSCKGPGQHMDIPRGHPDPQGRRRRPTQGAQGGK. Residues 1307-1317 show a composition bias toward basic and acidic residues; it reads DIPRGHPDPQG. Phosphotyrosine; by autocatalysis and SRC is present on residues Y1333 and Y1337. Phosphotyrosine; by autocatalysis is present on Y1363.

Belongs to the protein kinase superfamily. Tyr protein kinase family. CSF-1/PDGF receptor subfamily. Interacts with VEGFC and VEGFD. Monomer in the absence of bound VEGFC or VEGFD. Homodimer in the presence of bound VEGFC or VEGFD. Can also form a heterodimer with KDR. Interacts with PTPN14; the interaction is enhanced by stimulation with VEGFC. Interacts with CRK, GRB2, PTK2/FAK1, SHC1, PIK3R1 and PTPN11/SHP-2. Identified in a complex with SRC and ITGB1. Autophosphorylated on tyrosine residues upon ligand binding. Autophosphorylation occurs in trans, i.e. one subunit of the dimeric receptor phosphorylates tyrosine residues on the other subunit. Phosphorylation in response to H(2)O(2) is mediated by a process that requires SRC and PRKCD activity. Phosphorylation at Tyr-1068 is required for autophosphorylation at additional tyrosine residues. Phosphorylation at Tyr-1063 and Tyr-1337 is important for interaction with CRK and subsequent activation of MAPK8. Phosphorylation at Tyr-1230, Tyr-1231 and Tyr-1337 is important for interaction with GRB2 and subsequent activation of the AKT1 and MAPK1/ERK2 and/or MAPK3/ERK1 signaling pathways. In response to endothelial cell adhesion onto collagen, can also be phosphorylated in the absence of FLT4 kinase activity by SRC. As to expression, expressed in adult lung and liver, and in fetal liver, brain, intestine and placenta.

It is found in the cell membrane. Its subcellular location is the cytoplasm. The protein resides in the nucleus. It carries out the reaction L-tyrosyl-[protein] + ATP = O-phospho-L-tyrosyl-[protein] + ADP + H(+). Its activity is regulated as follows. Present in an inactive conformation in the absence of bound ligand. Binding of VEGFC or VEGFD leads to dimerization and activation by autophosphorylation on tyrosine residues. In terms of biological role, tyrosine-protein kinase that acts as a cell-surface receptor for VEGFC and VEGFD, and plays an essential role in adult lymphangiogenesis and in the development of the vascular network and the cardiovascular system during embryonic development. Promotes proliferation, survival and migration of endothelial cells, and regulates angiogenic sprouting. Signaling by activated FLT4 leads to enhanced production of VEGFC, and to a lesser degree VEGFA, thereby creating a positive feedback loop that enhances FLT4 signaling. Modulates KDR signaling by forming heterodimers. Mediates activation of the MAPK1/ERK2, MAPK3/ERK1 signaling pathway, of MAPK8 and the JUN signaling pathway, and of the AKT1 signaling pathway. Phosphorylates SHC1. Mediates phosphorylation of PIK3R1, the regulatory subunit of phosphatidylinositol 3-kinase. Promotes phosphorylation of MAPK8 at 'Thr-183' and 'Tyr-185', and of AKT1 at 'Ser-473'. The chain is Vascular endothelial growth factor receptor 3 (Flt4) from Mus musculus (Mouse).